Here is a 206-residue protein sequence, read N- to C-terminus: Protein GET1 (206 aa).

The Lumenal segment spans residues 1 to 4 (MPSL). A helical membrane pass occupies residues 5–24 (LITALFLNVIIYVINTVGAA). Topologically, residues 25–110 (TVDGLLWLLY…TFDITIKIAR (86 aa)) are cytoplasmic. Positions 75–100 (AKLRRRHDKALEAYEAKNNELTQSKS) form a coiled coil. The helical transmembrane segment at 111–131 (WAATSGLMLFLQFWYSKTPIF) threads the bilayer. Over 132 to 155 (TLPPGWIPWQVQWVLSFPRAPMGT) the chain is Lumenal. A helical transmembrane segment spans residues 156–172 (VSIQIWSGACATVVALV). The Cytoplasmic portion of the chain corresponds to 173–206 (GDAMKASLAYVSKPKIDRIKLGATMEGKEGKKRQ).

This sequence belongs to the WRB/GET1 family. In terms of assembly, interacts with GET3.

Its subcellular location is the endoplasmic reticulum membrane. Its function is as follows. Required for the post-translational delivery of tail-anchored (TA) proteins to the endoplasmic reticulum. Acts as a membrane receptor for soluble GET3, which recognizes and selectively binds the transmembrane domain of TA proteins in the cytosol. In Ajellomyces capsulatus (strain H143) (Darling's disease fungus), this protein is Protein GET1.